Here is a 583-residue protein sequence, read N- to C-terminus: Probable phosphoglucomutase, cytoplasmic 1 (583 aa).

Alpha-D-glucose 1,6-bisphosphate-binding residues include Arg24 and Ser123. The active-site Phosphoserine intermediate is the Ser123. 4 residues coordinate Mg(2+): Ser123, Asp299, Asp301, and Asp303. Ser123 carries the phosphoserine modification. Alpha-D-glucose 1,6-bisphosphate-binding residues include Asp303, Arg304, Thr367, Glu386, Ser388, and Lys399.

It belongs to the phosphohexose mutase family. As to quaternary structure, monomer. Mg(2+) serves as cofactor.

The protein localises to the cytoplasm. The enzyme catalyses alpha-D-glucose 1-phosphate = alpha-D-glucose 6-phosphate. It catalyses the reaction O-phospho-L-seryl-[protein] + alpha-D-glucose 1-phosphate = alpha-D-glucose 1,6-bisphosphate + L-seryl-[protein]. It carries out the reaction alpha-D-glucose 1,6-bisphosphate + L-seryl-[protein] = O-phospho-L-seryl-[protein] + alpha-D-glucose 6-phosphate. Catalyzes the reversible isomerization of alpha-D-glucose 1-phosphate to alpha-D-glucose 6-phosphate. The mechanism proceeds via the intermediate compound alpha-D-glucose 1,6-bisphosphate. This enzyme participates in both the breakdown and synthesis of glucose. The polypeptide is Probable phosphoglucomutase, cytoplasmic 1 (Arabidopsis thaliana (Mouse-ear cress)).